A 317-amino-acid polypeptide reads, in one-letter code: Proline-rich protein 2 (317 aa).

An N-terminal signal peptide occupies residues 1-16; the sequence is MLVVLFTVALLALSSA. Positions 15-317 are disordered; sequence SAQGPREELQ…PPQGRPQGPQ (303 aa). A compositionally biased stretch (pro residues) spans 32–44; it reads QRPPPSGSQPRPP. Asn46 is a glycosylation site (N-linked (GlcNAc...) asparagine). Composition is skewed to pro residues over residues 51-183 and 204-288; these read GPPP…PPAG and QSPP…PTQG. Over residues 289 to 305 the composition is skewed to low complexity; sequence PHPTGGPQQTPPLAGNP. Pro residues predominate over residues 306–317; that stretch reads QGPPQGRPQGPQ.

The protein resides in the secreted. In Mus musculus (Mouse), this protein is Proline-rich protein 2 (Prp2).